Reading from the N-terminus, the 431-residue chain is Putative F-box/FBD/LRR-repeat protein At4g26350 (431 aa).

Residues 1–47 enclose the F-box domain; the sequence is MDIISQCPDHLLLRILSFIPTKDVIVTSLLSKRWGSLWRWVPKLEYD. 5 LRR repeats span residues 52–78, 85–109, 132–159, 160–185, and 309–334; these read NMRF…HLKN, CRTV…EISI, ILTI…HLRC, IGWA…RLAR, and CTQG…TLTN. An FBD domain is found at 348-398; that stretch reads CWKRPSSVPACLLSSLQAFTWSGYKGRQGDKEVVKYVLRNATGLKKRIFIS.

The polypeptide is Putative F-box/FBD/LRR-repeat protein At4g26350 (Arabidopsis thaliana (Mouse-ear cress)).